A 150-amino-acid chain; its full sequence is 6,7-dimethyl-8-ribityllumazine synthase (150 aa).

5-amino-6-(D-ribitylamino)uracil is bound by residues phenylalanine 11, 42–44 (IFE), and 73–75 (CAI). Residue 78-79 (ES) coordinates (2S)-2-hydroxy-3-oxobutyl phosphate. Catalysis depends on histidine 81, which acts as the Proton donor. Position 106 (asparagine 106) interacts with 5-amino-6-(D-ribitylamino)uracil. Residue arginine 120 participates in (2S)-2-hydroxy-3-oxobutyl phosphate binding.

Belongs to the DMRL synthase family.

It catalyses the reaction (2S)-2-hydroxy-3-oxobutyl phosphate + 5-amino-6-(D-ribitylamino)uracil = 6,7-dimethyl-8-(1-D-ribityl)lumazine + phosphate + 2 H2O + H(+). Its pathway is cofactor biosynthesis; riboflavin biosynthesis; riboflavin from 2-hydroxy-3-oxobutyl phosphate and 5-amino-6-(D-ribitylamino)uracil: step 1/2. Catalyzes the formation of 6,7-dimethyl-8-ribityllumazine by condensation of 5-amino-6-(D-ribitylamino)uracil with 3,4-dihydroxy-2-butanone 4-phosphate. This is the penultimate step in the biosynthesis of riboflavin. This Paramagnetospirillum magneticum (strain ATCC 700264 / AMB-1) (Magnetospirillum magneticum) protein is 6,7-dimethyl-8-ribityllumazine synthase.